Consider the following 105-residue polypeptide: Nitrogen fixation nifHD region glnB-like protein 1 (105 aa).

This sequence belongs to the P(II) protein family.

Its function is as follows. Could be involved in the regulation of nitrogen fixation. This is Nitrogen fixation nifHD region glnB-like protein 1 (glnBI) from Methanococcus maripaludis (strain DSM 14266 / JCM 13030 / NBRC 101832 / S2 / LL).